The chain runs to 299 residues: Porphobilinogen deaminase (299 aa).

An S-(dipyrrolylmethanemethyl)cysteine modification is found at Cys-242.

This sequence belongs to the HMBS family. In terms of assembly, monomer. Requires dipyrromethane as cofactor.

It carries out the reaction 4 porphobilinogen + H2O = hydroxymethylbilane + 4 NH4(+). Its pathway is porphyrin-containing compound metabolism; protoporphyrin-IX biosynthesis; coproporphyrinogen-III from 5-aminolevulinate: step 2/4. Functionally, tetrapolymerization of the monopyrrole PBG into the hydroxymethylbilane pre-uroporphyrinogen in several discrete steps. In Rickettsia typhi (strain ATCC VR-144 / Wilmington), this protein is Porphobilinogen deaminase.